The primary structure comprises 344 residues: UDP-N-acetylenolpyruvoylglucosamine reductase (344 aa).

The FAD-binding PCMH-type domain occupies 17 to 187; it reads VDYACSELIS…TGVGIKLAKK (171 aa). Residue Arg-163 is part of the active site. Catalysis depends on Ser-233, which acts as the Proton donor. Residue Glu-329 is part of the active site.

The protein belongs to the MurB family. It depends on FAD as a cofactor.

It localises to the cytoplasm. It carries out the reaction UDP-N-acetyl-alpha-D-muramate + NADP(+) = UDP-N-acetyl-3-O-(1-carboxyvinyl)-alpha-D-glucosamine + NADPH + H(+). It participates in cell wall biogenesis; peptidoglycan biosynthesis. In terms of biological role, cell wall formation. The sequence is that of UDP-N-acetylenolpyruvoylglucosamine reductase from Shewanella sediminis (strain HAW-EB3).